Here is a 140-residue protein sequence, read N- to C-terminus: uncharacterized protein (140 aa).

The disordered stretch occupies residues 80-115; it reads KNGTRRHALPSPLEGSFQPGRQIPPPQTPSTDPQTL.

This is an uncharacterized protein from Homo sapiens (Human).